Consider the following 939-residue polypeptide: Isoleucine--tRNA ligase (939 aa).

The 'HIGH' region signature appears at 57 to 67 (PYANGHIHLGH). Glutamate 561 contacts L-isoleucyl-5'-AMP. The 'KMSKS' region motif lies at 602-606 (KMSKS). ATP is bound at residue lysine 605. 4 residues coordinate Zn(2+): cysteine 903, cysteine 906, cysteine 923, and cysteine 926.

The protein belongs to the class-I aminoacyl-tRNA synthetase family. IleS type 1 subfamily. In terms of assembly, monomer. Requires Zn(2+) as cofactor.

It is found in the cytoplasm. The catalysed reaction is tRNA(Ile) + L-isoleucine + ATP = L-isoleucyl-tRNA(Ile) + AMP + diphosphate. Its function is as follows. Catalyzes the attachment of isoleucine to tRNA(Ile). As IleRS can inadvertently accommodate and process structurally similar amino acids such as valine, to avoid such errors it has two additional distinct tRNA(Ile)-dependent editing activities. One activity is designated as 'pretransfer' editing and involves the hydrolysis of activated Val-AMP. The other activity is designated 'posttransfer' editing and involves deacylation of mischarged Val-tRNA(Ile). The chain is Isoleucine--tRNA ligase from Desulfotalea psychrophila (strain LSv54 / DSM 12343).